Reading from the N-terminus, the 147-residue chain is D-aminoacyl-tRNA deacylase (147 aa).

Positions 136 to 137 (GP) match the Gly-cisPro motif, important for rejection of L-amino acids motif.

The protein belongs to the DTD family. Homodimer.

Its subcellular location is the cytoplasm. It catalyses the reaction glycyl-tRNA(Ala) + H2O = tRNA(Ala) + glycine + H(+). The catalysed reaction is a D-aminoacyl-tRNA + H2O = a tRNA + a D-alpha-amino acid + H(+). In terms of biological role, an aminoacyl-tRNA editing enzyme that deacylates mischarged D-aminoacyl-tRNAs. Also deacylates mischarged glycyl-tRNA(Ala), protecting cells against glycine mischarging by AlaRS. Acts via tRNA-based rather than protein-based catalysis; rejects L-amino acids rather than detecting D-amino acids in the active site. By recycling D-aminoacyl-tRNA to D-amino acids and free tRNA molecules, this enzyme counteracts the toxicity associated with the formation of D-aminoacyl-tRNA entities in vivo and helps enforce protein L-homochirality. The polypeptide is D-aminoacyl-tRNA deacylase (Streptococcus pneumoniae (strain Taiwan19F-14)).